Reading from the N-terminus, the 364-residue chain is Uroporphyrinogen decarboxylase (364 aa).

Substrate contacts are provided by residues 28-32 (RQAGR), D78, Y160, T215, and H333.

Belongs to the uroporphyrinogen decarboxylase family. Homodimer.

The protein localises to the cytoplasm. The enzyme catalyses uroporphyrinogen III + 4 H(+) = coproporphyrinogen III + 4 CO2. It functions in the pathway porphyrin-containing compound metabolism; protoporphyrin-IX biosynthesis; coproporphyrinogen-III from 5-aminolevulinate: step 4/4. In terms of biological role, catalyzes the decarboxylation of four acetate groups of uroporphyrinogen-III to yield coproporphyrinogen-III. The sequence is that of Uroporphyrinogen decarboxylase from Burkholderia pseudomallei (strain 668).